We begin with the raw amino-acid sequence, 328 residues long: Nickel import system permease protein NikB (328 aa).

Transmembrane regions (helical) follow at residues 11 to 31 (LMQM…LMKL), 104 to 124 (LLIS…LGII), 139 to 159 (VIST…LLFI), 170 to 190 (ILSQ…AYII), 229 to 249 (ILPI…GTVV), and 279 to 299 (VLFI…LTLL). One can recognise an ABC transmembrane type-1 domain in the interval 100 to 297 (APITLLISFS…IINTIADLLT (198 aa)).

The protein belongs to the binding-protein-dependent transport system permease family. OppBC subfamily. As to quaternary structure, the complex is composed of two ATP-binding proteins (NikD and NikE), two transmembrane proteins (NikB and NikC) and a solute-binding protein (NikA).

Its subcellular location is the cell membrane. In terms of biological role, part of the ABC transporter complex NikABCDE (Opp2) involved in nickel import. Probably responsible for the translocation of the substrate across the membrane. This chain is Nickel import system permease protein NikB, found in Staphylococcus aureus (strain bovine RF122 / ET3-1).